We begin with the raw amino-acid sequence, 206 residues long: Methyl-coenzyme M reductase operon protein C (206 aa).

In terms of assembly, MCR is composed of three subunits: alpha, beta, and gamma. The function of proteins C and D is not known.

The chain is Methyl-coenzyme M reductase operon protein C (mcrC) from Methanosarcina barkeri (strain Fusaro / DSM 804).